Here is a 122-residue protein sequence, read N- to C-terminus: Large ribosomal subunit protein uL14 (122 aa).

This sequence belongs to the universal ribosomal protein uL14 family. Part of the 50S ribosomal subunit. Forms a cluster with proteins L3 and L19. In the 70S ribosome, L14 and L19 interact and together make contacts with the 16S rRNA in bridges B5 and B8.

Binds to 23S rRNA. Forms part of two intersubunit bridges in the 70S ribosome. This is Large ribosomal subunit protein uL14 from Roseiflexus castenholzii (strain DSM 13941 / HLO8).